The following is a 93-amino-acid chain: Pyrimidine/purine nucleoside phosphorylase (93 aa).

The protein belongs to the nucleoside phosphorylase PpnP family.

It catalyses the reaction a purine D-ribonucleoside + phosphate = a purine nucleobase + alpha-D-ribose 1-phosphate. The catalysed reaction is adenosine + phosphate = alpha-D-ribose 1-phosphate + adenine. The enzyme catalyses cytidine + phosphate = cytosine + alpha-D-ribose 1-phosphate. It carries out the reaction guanosine + phosphate = alpha-D-ribose 1-phosphate + guanine. It catalyses the reaction inosine + phosphate = alpha-D-ribose 1-phosphate + hypoxanthine. The catalysed reaction is thymidine + phosphate = 2-deoxy-alpha-D-ribose 1-phosphate + thymine. The enzyme catalyses uridine + phosphate = alpha-D-ribose 1-phosphate + uracil. It carries out the reaction xanthosine + phosphate = alpha-D-ribose 1-phosphate + xanthine. In terms of biological role, catalyzes the phosphorolysis of diverse nucleosides, yielding D-ribose 1-phosphate and the respective free bases. Can use uridine, adenosine, guanosine, cytidine, thymidine, inosine and xanthosine as substrates. Also catalyzes the reverse reactions. The polypeptide is Pyrimidine/purine nucleoside phosphorylase (Pseudomonas syringae pv. syringae (strain B728a)).